The following is a 232-amino-acid chain: Orotidine 5'-phosphate decarboxylase (232 aa).

Residues Asp11, Lys32, 59–68, Thr118, Arg180, Gln189, Gly209, and Arg210 contribute to the substrate site; that span reads DLKFHDIPNT. The active-site Proton donor is Lys61.

The protein belongs to the OMP decarboxylase family. Type 1 subfamily. Homodimer.

The enzyme catalyses orotidine 5'-phosphate + H(+) = UMP + CO2. Its pathway is pyrimidine metabolism; UMP biosynthesis via de novo pathway; UMP from orotate: step 2/2. Catalyzes the decarboxylation of orotidine 5'-monophosphate (OMP) to uridine 5'-monophosphate (UMP). The protein is Orotidine 5'-phosphate decarboxylase of Gloeothece citriformis (strain PCC 7424) (Cyanothece sp. (strain PCC 7424)).